A 181-amino-acid polypeptide reads, in one-letter code: Bifunctional protein PyrR (181 aa).

Residues 101–113 (VIVVDDVLYTGRT) carry the PRPP-binding motif.

It belongs to the purine/pyrimidine phosphoribosyltransferase family. PyrR subfamily. In terms of assembly, homodimer and homohexamer; in equilibrium.

The enzyme catalyses UMP + diphosphate = 5-phospho-alpha-D-ribose 1-diphosphate + uracil. In terms of biological role, regulates transcriptional attenuation of the pyrimidine nucleotide (pyr) operon by binding in a uridine-dependent manner to specific sites on pyr mRNA. This disrupts an antiterminator hairpin in the RNA and favors formation of a downstream transcription terminator, leading to a reduced expression of downstream genes. Functionally, also displays a weak uracil phosphoribosyltransferase activity which is not physiologically significant. The protein is Bifunctional protein PyrR of Bacillus velezensis (strain DSM 23117 / BGSC 10A6 / LMG 26770 / FZB42) (Bacillus amyloliquefaciens subsp. plantarum).